A 305-amino-acid chain; its full sequence is tRNA uridine(34) hydroxylase (305 aa).

Positions 130 to 228 (DDPDTLVIDT…YLGEIPEQES (99 aa)) constitute a Rhodanese domain. Cys188 functions as the Cysteine persulfide intermediate in the catalytic mechanism.

Belongs to the TrhO family.

The enzyme catalyses uridine(34) in tRNA + AH2 + O2 = 5-hydroxyuridine(34) in tRNA + A + H2O. Catalyzes oxygen-dependent 5-hydroxyuridine (ho5U) modification at position 34 in tRNAs. This Synechococcus sp. (strain CC9902) protein is tRNA uridine(34) hydroxylase.